The chain runs to 547 residues: Chaperonin GroEL (547 aa).

ATP contacts are provided by residues 30-33 (TLGP), K51, 87-91 (DGTTT), G415, and D495.

This sequence belongs to the chaperonin (HSP60) family. As to quaternary structure, forms a cylinder of 14 subunits composed of two heptameric rings stacked back-to-back. Interacts with the co-chaperonin GroES.

Its subcellular location is the cytoplasm. It catalyses the reaction ATP + H2O + a folded polypeptide = ADP + phosphate + an unfolded polypeptide.. Together with its co-chaperonin GroES, plays an essential role in assisting protein folding. The GroEL-GroES system forms a nano-cage that allows encapsulation of the non-native substrate proteins and provides a physical environment optimized to promote and accelerate protein folding. This is Chaperonin GroEL from Aggregatibacter actinomycetemcomitans (Actinobacillus actinomycetemcomitans).